A 147-amino-acid polypeptide reads, in one-letter code: MSNFTAEDKAAITSLWAKVNVEDAGGETLGRLLVVYPWTQRFFDSFGSLSSPSAIMGNPKVKAHGVKVLTSLGEAIKNLDDLKGTFGQLSELHCDKLHVDPENFRLLGNVLVTVLAILYGKEFTPEVQASWQKMVAGVASALASRYH.

Residues Asn-3 to His-147 form the Globin domain. Heme b contacts are provided by His-64 and His-93.

Belongs to the globin family. As to quaternary structure, heterotetramer of two alpha chains and two gamma chains in fetal hemoglobin (Hb F). In terms of tissue distribution, red blood cells.

Gamma chains make up the fetal hemoglobin F, in combination with alpha chains. In Callithrix jacchus (White-tufted-ear marmoset), this protein is Hemoglobin subunit gamma (HBG1).